The following is a 258-amino-acid chain: Indole-3-glycerol phosphate synthase (258 aa).

This sequence belongs to the TrpC family.

It carries out the reaction 1-(2-carboxyphenylamino)-1-deoxy-D-ribulose 5-phosphate + H(+) = (1S,2R)-1-C-(indol-3-yl)glycerol 3-phosphate + CO2 + H2O. It functions in the pathway amino-acid biosynthesis; L-tryptophan biosynthesis; L-tryptophan from chorismate: step 4/5. This is Indole-3-glycerol phosphate synthase from Chlorobium phaeovibrioides (strain DSM 265 / 1930) (Prosthecochloris vibrioformis (strain DSM 265)).